Consider the following 201-residue polypeptide: Large ribosomal subunit protein uL4 (201 aa).

Positions 44 to 68 (KAQKTRSEVAGTTKKSKKQKGGGAR) are disordered.

Belongs to the universal ribosomal protein uL4 family. As to quaternary structure, part of the 50S ribosomal subunit.

Its function is as follows. One of the primary rRNA binding proteins, this protein initially binds near the 5'-end of the 23S rRNA. It is important during the early stages of 50S assembly. It makes multiple contacts with different domains of the 23S rRNA in the assembled 50S subunit and ribosome. In terms of biological role, forms part of the polypeptide exit tunnel. In Xanthomonas axonopodis pv. citri (strain 306), this protein is Large ribosomal subunit protein uL4.